A 383-amino-acid chain; its full sequence is Galactokinase (383 aa).

34-37 (EHTD) serves as a coordination point for substrate. Position 124–130 (124–130 (GAGLSSS)) interacts with ATP. Residues S130 and E162 each coordinate Mg(2+). The active-site Proton acceptor is D174. Y223 lines the substrate pocket.

The protein belongs to the GHMP kinase family. GalK subfamily.

It is found in the cytoplasm. It catalyses the reaction alpha-D-galactose + ATP = alpha-D-galactose 1-phosphate + ADP + H(+). The protein operates within carbohydrate metabolism; galactose metabolism. Functionally, catalyzes the transfer of the gamma-phosphate of ATP to D-galactose to form alpha-D-galactose-1-phosphate (Gal-1-P). The sequence is that of Galactokinase from Yersinia pseudotuberculosis serotype IB (strain PB1/+).